Here is a 940-residue protein sequence, read N- to C-terminus: MKRQSVSEIREIFLNYFKDKAHAVVPSSSLLPAGDPTLLFTTAGMVQFKPLFTGAVELPYTRATSCQKCLRTTDLEVVGKTERHCTFFEMLGNFSFGDYFKEEAIDYALDCSVNHLGFDKEKIWVTVYTDDDEAEKIWITKGIPKERIMRLGKKDNFWGPAGDSGACGPCSELYLDRGVEKGGPDCATSGTCRPGCDCDRFLEFWNIVFNQFNQDTEGNLHPLKQTGIDTGSGLERVALLLQGADSVYDTNELRKIISFYEELSGIKYDDVITLSKMPTQKNNTARIAANQKAAFRVVTDHIRSVLFSIGDGIYPDRTGRGYVIRRLIRRATLFGRKLNFKEPFLYKLVDKVVEIYKPRYPELGKNSAAIQKTILAEEELFLKTLELGLEKIETLVAKTKTSGKTIFSGADAFLLYGTYGFPAEMTEEIVAEQGLDFDKKGFQEELEKDRQFSRESWKANKVSLMTGQSVEKTEFLGYSSLSGKGNIIHLFNENKPAGALKEGQAGAIVLNKTPFYPEGGGQVGDTGFLRQGKNVFKVLDTQKENDVILHFGEVLSGEFSIAQELEAEVEAARRERLRFHHSGTHLLNGALRNLLGDHVLQKGSVVSPEYLRFDFSHPSALTSKEIRKIESWVNESIRKNYPVVTKELPIEDAKKIGAVATFGEKYGDRVRVVQMGDASVEFCGGTHVSHTGEIGYFFIKKESSPGAGNRRIEGVCGPAVIETFQNRFAELTESVQNLNLKIKSELDNEGSKILVNSNVPGPDEIREKLEKEGATAVTFFRDLSEEIASQIEESTSAFLKMKKSLESRDFENNASVIEKVFASSMDTGVGKIVSAIFDDKDPNSLKGLSDNLKVREKNLLVILGSKNADNASVVITCSSQLVSKGIHCGDLVRTVCEMLGGKGGGKPDMAQGGGKEKQNLESAISFAIQLAKQTLTGEKV.

Positions 581, 585, 683, and 687 each coordinate Zn(2+).

This sequence belongs to the class-II aminoacyl-tRNA synthetase family. Zn(2+) serves as cofactor.

It is found in the cytoplasm. It catalyses the reaction tRNA(Ala) + L-alanine + ATP = L-alanyl-tRNA(Ala) + AMP + diphosphate. Its function is as follows. Catalyzes the attachment of alanine to tRNA(Ala) in a two-step reaction: alanine is first activated by ATP to form Ala-AMP and then transferred to the acceptor end of tRNA(Ala). Also edits incorrectly charged Ser-tRNA(Ala) and Gly-tRNA(Ala) via its editing domain. The chain is Alanine--tRNA ligase from Leptospira borgpetersenii serovar Hardjo-bovis (strain L550).